We begin with the raw amino-acid sequence, 666 residues long: Threonine--tRNA ligase (666 aa).

In terms of domain architecture, TGS spans 1–64; it reads MSDTVSLTFP…VDGKIEIVTR (64 aa). The catalytic stretch occupies residues 245-553; that stretch reads DHRKLGREMD…LIENFAGHMP (309 aa). The Zn(2+) site is built by Cys-347, His-398, and His-530.

The protein belongs to the class-II aminoacyl-tRNA synthetase family. Homodimer. The cofactor is Zn(2+).

The protein localises to the cytoplasm. It catalyses the reaction tRNA(Thr) + L-threonine + ATP = L-threonyl-tRNA(Thr) + AMP + diphosphate + H(+). Functionally, catalyzes the attachment of threonine to tRNA(Thr) in a two-step reaction: L-threonine is first activated by ATP to form Thr-AMP and then transferred to the acceptor end of tRNA(Thr). Also edits incorrectly charged L-seryl-tRNA(Thr). This Allorhizobium ampelinum (strain ATCC BAA-846 / DSM 112012 / S4) (Agrobacterium vitis (strain S4)) protein is Threonine--tRNA ligase.